Consider the following 421-residue polypeptide: UDP-N-acetylglucosamine 1-carboxyvinyltransferase 2 (421 aa).

22–23 (KN) serves as a coordination point for phosphoenolpyruvate. UDP-N-acetyl-alpha-D-glucosamine is bound at residue R95. C119 acts as the Proton donor in catalysis. C119 is modified (2-(S-cysteinyl)pyruvic acid O-phosphothioketal). UDP-N-acetyl-alpha-D-glucosamine-binding positions include 124 to 128 (RPIEQ), D308, and V330.

This sequence belongs to the EPSP synthase family. MurA subfamily.

Its subcellular location is the cytoplasm. It catalyses the reaction phosphoenolpyruvate + UDP-N-acetyl-alpha-D-glucosamine = UDP-N-acetyl-3-O-(1-carboxyvinyl)-alpha-D-glucosamine + phosphate. The protein operates within cell wall biogenesis; peptidoglycan biosynthesis. Cell wall formation. Adds enolpyruvyl to UDP-N-acetylglucosamine. This chain is UDP-N-acetylglucosamine 1-carboxyvinyltransferase 2, found in Staphylococcus haemolyticus (strain JCSC1435).